The primary structure comprises 469 residues: Calcium-binding mitochondrial carrier protein SCaMC-2-B (469 aa).

The Mitochondrial intermembrane portion of the chain corresponds to 1–189 (MLCLCLYVPV…EKNTGMWWRH (189 aa)). 3 consecutive EF-hand domains span residues 47–80 (SYRK…RDHE), 78–113 (DHEK…LGVH), and 114–149 (ISEE…HPAE). Residues D60, D62, D64, Q66, and E71 each coordinate Ca(2+). Solcar repeat units follow at residues 184–270 (GMWW…IKRL), 278–363 (LGIL…LKNS), and 375–463 (PGVF…LKIT). The chain crosses the membrane as a helical span at residues 190–207 (LVAGGGAGAVSRTCTAPL). The Mitochondrial matrix portion of the chain corresponds to 208–244 (DRLKVLMQVHATRSNSMGIAGGFTQMIREGGLRSLWR). Residues 245 to 264 (GNGINVLKIAPESAIKFMAY) form a helical membrane-spanning segment. Topologically, residues 265–287 (EQIKRLIGSNQETLGILERLVSG) are mitochondrial intermembrane. Residues 288–301 (SLAGAIAQSSIYPM) traverse the membrane as a helical segment. Residues 302 to 337 (EVLKTRLALGRTGQYSGIADCAKHIFKKEGMTAFYK) are Mitochondrial matrix-facing. The helical transmembrane segment at 338–357 (GYIPNMLGIIPYAGIDLAVY) threads the bilayer. Residues 358–380 (ETLKNSWLQRFATDSADPGVFVL) are Mitochondrial intermembrane-facing. The helical transmembrane segment at 381-398 (LACGTMSSTCGQLASYPL) threads the bilayer. The Mitochondrial matrix portion of the chain corresponds to 399–437 (ALVRTRMQAQASQEGSPQMTMSGLFRHIVRTEGAIGLYR). Residues 438 to 457 (GLAPNFMKVIPAVSISYVVY) traverse the membrane as a helical segment. The Mitochondrial intermembrane portion of the chain corresponds to 458–469 (ENLKITLGVQSR).

It belongs to the mitochondrial carrier (TC 2.A.29) family.

It localises to the mitochondrion inner membrane. In terms of biological role, calcium-dependent mitochondrial solute carrier. This chain is Calcium-binding mitochondrial carrier protein SCaMC-2-B (slc25a25b), found in Danio rerio (Zebrafish).